A 50-amino-acid chain; its full sequence is Large ribosomal subunit protein bL33 (50 aa).

It belongs to the bacterial ribosomal protein bL33 family.

This Solibacter usitatus (strain Ellin6076) protein is Large ribosomal subunit protein bL33.